The following is a 102-amino-acid chain: Monothiol glutaredoxin-S7 (102 aa).

The Glutaredoxin domain maps to 1–101; it reads MEKLQKMTSE…PMLKRVGALW (101 aa). Cys-21 is a binding site for [2Fe-2S] cluster. Positions 99–102 match the Responsive for interaction with TGA factors motif; the sequence is ALWL.

Belongs to the glutaredoxin family. CC-type subfamily.

The protein localises to the cytoplasm. It is found in the nucleus. Functionally, may only reduce GSH-thiol disulfides, but not protein disulfides. The chain is Monothiol glutaredoxin-S7 (GRXS7) from Arabidopsis thaliana (Mouse-ear cress).